Here is a 387-residue protein sequence, read N- to C-terminus: Pepsin A-5 (387 aa).

Residues 1–15 (MKWLWVLGLVALSEC) form the signal peptide. A propeptide spans 16–62 (LVKIPLMKIKSMRENLRESQVLKDYLEKYPRSRAHVLLEQRRNPAVT) (activation peptide). The region spanning 74–384 (YIGIISIGTP…DRANNRIGLA (311 aa)) is the Peptidase A1 domain. Asp-92 is a catalytic residue. 2 disulfide bridges follow: Cys-105–Cys-110 and Cys-266–Cys-270. Asp-275 is a catalytic residue. Cys-309 and Cys-343 form a disulfide bridge.

It belongs to the peptidase A1 family. Expressed in glandular chief cells of the neonatal stomach. Expressed in yolk sacs of the placenta (at protein level).

It is found in the secreted. It carries out the reaction Preferential cleavage: hydrophobic, preferably aromatic, residues in P1 and P1' positions. Cleaves 1-Phe-|-Val-2, 4-Gln-|-His-5, 13-Glu-|-Ala-14, 14-Ala-|-Leu-15, 15-Leu-|-Tyr-16, 16-Tyr-|-Leu-17, 23-Gly-|-Phe-24, 24-Phe-|-Phe-25 and 25-Phe-|-Tyr-26 bonds in the B chain of insulin.. Inhibited by pepstatin A. In terms of biological role, shows particularly broad specificity; although bonds involving phenylalanine and leucine are preferred, many others are also cleaved to some extent. May play a role as a specialized neonatal digestive enzyme. In Mus musculus (Mouse), this protein is Pepsin A-5.